The chain runs to 289 residues: MQQSTLLKPVSCYGIGVHTGKRTQLTIEPAKENTGIIFIRTDISSENNYIEASYYNVSDTLLSTTISNNHKIQVSTIEHLMAALWGCSIDNAVIKIDGPEVPIMDGSSKPFVFMIECAGKKLQNAPKKYLKILKEIKVVNKDCELYCTPSEHITVDLTIDFSSKAIGKQNLNFGVQESFTKNIADARTFGFIKDVEYLKSKGLAQGASFENAIGIDEHDKVLNPSGLRYADEFVRHKLLDLFGDLYTSGISIVSAIKGYKTSHAFNNELLHKIFSDTTSYKFVTSNELS.

Positions 79, 236, and 240 each coordinate Zn(2+). Residue His-263 is the Proton donor of the active site.

It belongs to the LpxC family. It depends on Zn(2+) as a cofactor.

It carries out the reaction a UDP-3-O-[(3R)-3-hydroxyacyl]-N-acetyl-alpha-D-glucosamine + H2O = a UDP-3-O-[(3R)-3-hydroxyacyl]-alpha-D-glucosamine + acetate. Its pathway is glycolipid biosynthesis; lipid IV(A) biosynthesis; lipid IV(A) from (3R)-3-hydroxytetradecanoyl-[acyl-carrier-protein] and UDP-N-acetyl-alpha-D-glucosamine: step 2/6. Functionally, catalyzes the hydrolysis of UDP-3-O-myristoyl-N-acetylglucosamine to form UDP-3-O-myristoylglucosamine and acetate, the committed step in lipid A biosynthesis. This Rickettsia typhi (strain ATCC VR-144 / Wilmington) protein is UDP-3-O-acyl-N-acetylglucosamine deacetylase.